Consider the following 369-residue polypeptide: Phospho-N-acetylmuramoyl-pentapeptide-transferase (369 aa).

10 helical membrane passes run 13 to 33, 49 to 69, 95 to 115, 119 to 139, 154 to 174, 183 to 203, 215 to 235, 237 to 257, 281 to 301, and 346 to 366; these read ISGIGLASSLAAGLGIAALTL, LPLLLCTIASAIAGYFVVPLL, MGGIFFIPVAVVGACVLSNFA, LAVSALTLSYGLIGWIDDWQI, LALQIGFAAAFCLWLMFNQPA, WVSFALPLGFLFWPLAGFVLV, IDGLAGGTVAIALLALGAIVA, TSPALMVFCAALSGSCLGFLA, AVALLTNSLVALFILSGIFFV, and VVSSFYVIAAILAAICLAIAS.

This sequence belongs to the glycosyltransferase 4 family. MraY subfamily. Mg(2+) serves as cofactor.

It is found in the cell inner membrane. It carries out the reaction UDP-N-acetyl-alpha-D-muramoyl-L-alanyl-gamma-D-glutamyl-meso-2,6-diaminopimeloyl-D-alanyl-D-alanine + di-trans,octa-cis-undecaprenyl phosphate = di-trans,octa-cis-undecaprenyl diphospho-N-acetyl-alpha-D-muramoyl-L-alanyl-D-glutamyl-meso-2,6-diaminopimeloyl-D-alanyl-D-alanine + UMP. The protein operates within cell wall biogenesis; peptidoglycan biosynthesis. Catalyzes the initial step of the lipid cycle reactions in the biosynthesis of the cell wall peptidoglycan: transfers peptidoglycan precursor phospho-MurNAc-pentapeptide from UDP-MurNAc-pentapeptide onto the lipid carrier undecaprenyl phosphate, yielding undecaprenyl-pyrophosphoryl-MurNAc-pentapeptide, known as lipid I. The sequence is that of Phospho-N-acetylmuramoyl-pentapeptide-transferase from Nostoc sp. (strain PCC 7120 / SAG 25.82 / UTEX 2576).